Reading from the N-terminus, the 537-residue chain is MYHIFQISSEVFRAFGLKMKILLTLVFSGLLIWSVVLVSFSNDFNNQLLVATSNVSRESETPRDRLIGGLLTADFDEGSCLSRYQQSLLYRKASPYKPSEYLVSKLRSYEKLHKRCGPGTDAYKKATEILGHDDENYASKSVGECRYIVWVAVYGLGNRILTLASVFLYALLTERVVLVDQSKDISDLFCEPFPGTSWLLPLEFPLMKQIDGYNKGYSRCYGTMLNNQAINSTLIPPHLYLHILHDSRDNDKMFFCQKDQSLVDKVPWLIVKANVYFVPSLWLNPTFQTELMKLFPQKEAVFHHLARYLFHPTNQVWGLITRSYNAYLSRADETLGIQIRVFSDRAGYFQHVMDQVVACTRRENLLPEPAAQEEPKVNISRSQKLKAVLVTSLYPEYSETLKNMYWERPSSTGEIIEVYQPSGERVQQTDKKLHDQKALAEMYLLSLTDKIVTSARSTFGYVAHSLGGLKPWLLYQPTGPTAPDPPCIQSTSMDPCHLTPPSHGCEPEWGTNSGKVVPFVRHCEDRGNDGLKLFDEL.

Over Met-1–Lys-20 the chain is Cytoplasmic. Residues Ile-21–Ser-41 form a helical; Signal-anchor for type II membrane protein membrane-spanning segment. Residues Asn-42–Leu-537 lie on the Lumenal side of the membrane. N-linked (GlcNAc...) asparagine glycosylation is found at Asn-54, Asn-231, and Asn-378.

The protein belongs to the glycosyltransferase 37 family. Expressed in roots and flowers.

The protein localises to the golgi apparatus. It localises to the golgi stack membrane. The protein operates within protein modification; protein glycosylation. Functionally, may be involved in cell wall biosynthesis. May act as a fucosyltransferase. The sequence is that of Fucosyltransferase 6 (FUT6) from Arabidopsis thaliana (Mouse-ear cress).